We begin with the raw amino-acid sequence, 117 residues long: Protein Aeq5-like2 (117 aa).

The Cytoplasmic portion of the chain corresponds to 1 to 36; sequence MLVNARAIRQSIGIVVAQCRRDLESNRTLDYRTRMR. The chain crosses the membrane as a helical span at residues 37 to 56; it reads TSLILVAMVMVSVLLPYTYG. At 57–117 the chain is on the extracellular side; that stretch reads SSCDSFCTEQ…RFTKEPTEES (61 aa). 4 cysteine pairs are disulfide-bonded: C59–C94, C63–C90, C70–C83, and C74–C80.

In terms of processing, the mature peptide may be cleaved at a dibasic residue site and be shorter than the sequence shown (possibly residues 1-94). Expressed in endodermal ganglion neurons, apparently bipolar and following mesentery folds (observed in both planulae and primary polyps). It not expressed in nematocytes.

It is found in the membrane. This chain is Protein Aeq5-like2, found in Nematostella vectensis (Starlet sea anemone).